The sequence spans 213 residues: Orotate phosphoribosyltransferase (213 aa).

Lys26 is a binding site for 5-phospho-alpha-D-ribose 1-diphosphate. Position 34-35 (34-35) interacts with orotate; that stretch reads FF. Residues 72-73, Arg99, Lys100, Lys103, His105, and 124-132 each bind 5-phospho-alpha-D-ribose 1-diphosphate; these read YK and DDVITAGTA. Positions 128 and 156 each coordinate orotate.

This sequence belongs to the purine/pyrimidine phosphoribosyltransferase family. PyrE subfamily. As to quaternary structure, homodimer. Requires Mg(2+) as cofactor.

It carries out the reaction orotidine 5'-phosphate + diphosphate = orotate + 5-phospho-alpha-D-ribose 1-diphosphate. It functions in the pathway pyrimidine metabolism; UMP biosynthesis via de novo pathway; UMP from orotate: step 1/2. Functionally, catalyzes the transfer of a ribosyl phosphate group from 5-phosphoribose 1-diphosphate to orotate, leading to the formation of orotidine monophosphate (OMP). The chain is Orotate phosphoribosyltransferase from Edwardsiella ictaluri (strain 93-146).